We begin with the raw amino-acid sequence, 371 residues long: Outer membrane protein P2 (371 aa).

The signal sequence occupies residues 1 to 20 (MKKTLAALIVGAFAASAANA).

This sequence belongs to the Gram-negative porin family. Homotrimer.

Its subcellular location is the cell outer membrane. Forms pores that allow passive diffusion of small molecules across the outer membrane. The protein is Outer membrane protein P2 (ompP2) of Haemophilus influenzae.